Consider the following 435-residue polypeptide: Palmitoyltransferase pfa4 (435 aa).

Residues 1-10 (MLCSSFSVSR) lie on the Cytoplasmic side of the membrane. A helical transmembrane segment spans residues 11-31 (LAIPAVCILIAFLAYTSQIFF). Residues 32-48 (LYFEDAPLKEDEVWRIN) are Lumenal-facing. The chain crosses the membrane as a helical span at residues 49-69 (ILAICIWICYYRACTVDPGHV). Topologically, residues 70–129 (PKGWMPSDRERLKADRASGRQRWCRRCEAYKPPRAHHCKTCERCVPKMDHHCPWTSNCVS) are cytoplasmic. The 51-residue stretch at 91 to 141 (RWCRRCEAYKPPRAHHCKTCERCVPKMDHHCPWTSNCVSHFTFPHFARFLF) folds into the DHHC domain. Cysteine 121 functions as the S-palmitoyl cysteine intermediate in the catalytic mechanism. The helical transmembrane segment at 130-150 (HFTFPHFARFLFYAVVGIAYL) threads the bilayer. Topologically, residues 151–179 (ETRLWQRVSKVWGSRHLPSYLGPSMGQIG) are lumenal. A helical membrane pass occupies residues 180–200 (HLFVLFVTNSLTLFALSLLLL). Residues 201–435 (RTLWSLGSNT…QRAKRQHLSQ (235 aa)) lie on the Cytoplasmic side of the membrane. Basic and acidic residues predominate over residues 359–368 (RKPFHVRLEE). Residues 359-408 (RKPFHVRLEEYSNGSSDAEADTGSDDDSDHGEEGWKNSEGERLRDFGVDE) are disordered. The span at 376 to 388 (AEADTGSDDDSDH) shows a compositional bias: acidic residues. Over residues 389–405 (GEEGWKNSEGERLRDFG) the composition is skewed to basic and acidic residues.

This sequence belongs to the DHHC palmitoyltransferase family. PFA4 subfamily.

It localises to the endoplasmic reticulum membrane. The enzyme catalyses L-cysteinyl-[protein] + hexadecanoyl-CoA = S-hexadecanoyl-L-cysteinyl-[protein] + CoA. Its function is as follows. Mediates the reversible addition of palmitate to target proteins, thereby regulating their membrane association and biological function. This Emericella nidulans (strain FGSC A4 / ATCC 38163 / CBS 112.46 / NRRL 194 / M139) (Aspergillus nidulans) protein is Palmitoyltransferase pfa4.